A 144-amino-acid polypeptide reads, in one-letter code: SsrA-binding protein (144 aa).

This sequence belongs to the SmpB family.

It is found in the cytoplasm. Its function is as follows. Required for rescue of stalled ribosomes mediated by trans-translation. Binds to transfer-messenger RNA (tmRNA), required for stable association of tmRNA with ribosomes. tmRNA and SmpB together mimic tRNA shape, replacing the anticodon stem-loop with SmpB. tmRNA is encoded by the ssrA gene; the 2 termini fold to resemble tRNA(Ala) and it encodes a 'tag peptide', a short internal open reading frame. During trans-translation Ala-aminoacylated tmRNA acts like a tRNA, entering the A-site of stalled ribosomes, displacing the stalled mRNA. The ribosome then switches to translate the ORF on the tmRNA; the nascent peptide is terminated with the 'tag peptide' encoded by the tmRNA and targeted for degradation. The ribosome is freed to recommence translation, which seems to be the essential function of trans-translation. The chain is SsrA-binding protein from Thermus thermophilus (strain ATCC BAA-163 / DSM 7039 / HB27).